Here is a 289-residue protein sequence, read N- to C-terminus: 2-hydroxy-6-oxononadienedioate/2-hydroxy-6-oxononatrienedioate hydrolase (289 aa).

In terms of domain architecture, AB hydrolase-1 spans 39–275; it reads TVVMLHGSGP…RCGHWAQWEH (237 aa). His269 acts as the Proton acceptor in catalysis.

Belongs to the AB hydrolase superfamily. MhpC family. As to quaternary structure, homodimer.

It catalyses the reaction (2Z,4E)-2-hydroxy-6-oxonona-2,4-dienedioate + H2O = (2Z)-2-hydroxypenta-2,4-dienoate + succinate + H(+). The catalysed reaction is (2Z,4E,7E)-2-hydroxy-6-oxonona-2,4,7-trienedioate + H2O = (2Z)-2-hydroxypenta-2,4-dienoate + fumarate + H(+). The protein operates within aromatic compound metabolism; 3-phenylpropanoate degradation. Its function is as follows. Catalyzes the cleavage of the C5-C6 bond of 2-hydroxy-6-oxononadienedioate and 2-hydroxy-6-oxononatrienedioate, a dienol ring fission product of the bacterial meta-cleavage pathway for degradation of phenylpropionic acid. The sequence is that of 2-hydroxy-6-oxononadienedioate/2-hydroxy-6-oxononatrienedioate hydrolase from Paraburkholderia xenovorans (strain LB400).